The following is a 294-amino-acid chain: Ribosomal protein L11 methyltransferase (294 aa).

The S-adenosyl-L-methionine site is built by Thr-145, Gly-166, Asp-188, and Asn-227.

This sequence belongs to the methyltransferase superfamily. PrmA family.

It localises to the cytoplasm. The enzyme catalyses L-lysyl-[protein] + 3 S-adenosyl-L-methionine = N(6),N(6),N(6)-trimethyl-L-lysyl-[protein] + 3 S-adenosyl-L-homocysteine + 3 H(+). In terms of biological role, methylates ribosomal protein L11. This Hydrogenovibrio crunogenus (strain DSM 25203 / XCL-2) (Thiomicrospira crunogena) protein is Ribosomal protein L11 methyltransferase.